Reading from the N-terminus, the 343-residue chain is MLRRVVLSRLYARLGGPAVSAGRGGRRGVASSVPPSGSTSPRALNIFDRELKRKQKNWAARQPEPMKFDYLKEEIGSRIADRVYDIARDFPLALDIGCGRGYIAQHLNKETVGKIFQTDIAEHALKNSIETDIPTVNILADEEFLPFPENTFDLVVSSLSLHWVNDLPRALEQIHYVLKPDGVFVGAMFGGDTLYELRCSLQLAETEREGGFSPHISPFTAVNDLGHLLGRAGFNTLTVDTDEIQVNYPGMFELMEDLKGMGESNCSWNRKALLHRDTMLAAAAVYREMYSNEDGSIPATYQIYHMIGWKYHDSQARPAERGSATVSFGDLARLNDTMSQGKK.

The N-terminal 29 residues, 1–29 (MLRRVVLSRLYARLGGPAVSAGRGGRRGV), are a transit peptide targeting the mitochondrion. Positions 18–40 (AVSAGRGGRRGVASSVPPSGSTS) are disordered.

This sequence belongs to the methyltransferase superfamily. In terms of assembly, interacts with NDUFAF8, leading to stabilize NDUFAF5. Interacts with NDUFS7. Interacts with PYURF (via TRM112 domain); the interaction is direct and stabilizes NDUFAF5 protein.

It is found in the mitochondrion inner membrane. In terms of biological role, arginine hydroxylase that mediates hydroxylation of 'Arg-111' of NDUFS7 and is involved in the assembly of mitochondrial NADH:ubiquinone oxidoreductase complex (complex I, MT-ND1) at early stages. May also have methyltransferase activity. This Rattus norvegicus (Rat) protein is Arginine-hydroxylase NDUFAF5, mitochondrial.